A 147-amino-acid chain; its full sequence is Hemoglobin subunit gamma (147 aa).

Residues 3 to 147 form the Globin domain; the sequence is HFTAEEKAVI…VAIALAHKYH (145 aa). The heme b site is built by His64 and His93.

This sequence belongs to the globin family. As to quaternary structure, heterotetramer of two alpha chains and two gamma chains in fetal hemoglobin (Hb F). As to expression, red blood cells.

Its function is as follows. Gamma chains make up the fetal hemoglobin F, in combination with alpha chains. The protein is Hemoglobin subunit gamma (HBG) of Eulemur fulvus fulvus (Brown lemur).